We begin with the raw amino-acid sequence, 340 residues long: Glycerol-3-phosphate dehydrogenase [NAD(P)+] (340 aa).

Residues Ser-14, Phe-15, Arg-35, and Lys-109 each coordinate NADPH. The sn-glycerol 3-phosphate site is built by Lys-109 and Gly-137. Ala-141 lines the NADPH pocket. Lys-192, Asp-245, Ser-255, Arg-256, and Asn-257 together coordinate sn-glycerol 3-phosphate. The Proton acceptor role is filled by Lys-192. Arg-256 contacts NADPH. The NADPH site is built by Val-280 and Glu-282.

It belongs to the NAD-dependent glycerol-3-phosphate dehydrogenase family.

Its subcellular location is the cytoplasm. It catalyses the reaction sn-glycerol 3-phosphate + NAD(+) = dihydroxyacetone phosphate + NADH + H(+). The enzyme catalyses sn-glycerol 3-phosphate + NADP(+) = dihydroxyacetone phosphate + NADPH + H(+). It participates in membrane lipid metabolism; glycerophospholipid metabolism. Its function is as follows. Catalyzes the reduction of the glycolytic intermediate dihydroxyacetone phosphate (DHAP) to sn-glycerol 3-phosphate (G3P), the key precursor for phospholipid synthesis. The polypeptide is Glycerol-3-phosphate dehydrogenase [NAD(P)+] (Teredinibacter turnerae (strain ATCC 39867 / T7901)).